The following is a 495-amino-acid chain: DDB1- and CUL4-associated factor 4 (495 aa).

The span at 1–17 (MNKSRWQSRRRHGRRSH) shows a compositional bias: basic residues. Positions 1–66 (MNKSRWQSRR…TAGTSSVPEL (66 aa)) are disordered. Residues 24–34 (RLRDSEDRSDS) are compositionally biased toward basic and acidic residues. The span at 51–62 (PSTSSGTAGTSS) shows a compositional bias: low complexity. 2 WD repeats span residues 368 to 407 (FHDSAVTSVRILQDEQYLMASDMAGKIKLWDLRTTKCVRQ) and 410 to 451 (GHVN…LLRT).

Interacts with DDB1 and CUL4A.

The protein operates within protein modification; protein ubiquitination. Its function is as follows. May function as a substrate receptor for CUL4-DDB1 E3 ubiquitin-protein ligase complex. The chain is DDB1- and CUL4-associated factor 4 (DCAF4) from Homo sapiens (Human).